The sequence spans 340 residues: MKRSLEQIARLVSGRVVGDAAKKVSGAAPFEQAGPEEITLAGSAGFLKRIDQTGAGALVVPTDFTDSRRNLVAVENPAAAFARIRQMFDTGCRQPVGIDPRAVIGGGFACGEDVSIGPGVVIGDHVTLGDRVLLYPGVFLGNHVRIGNDGIIHANTSILRECVLGNRVIIHAGSVIGSDGFGFAPDGEMYVKIPHSGMVQIDDDVEIGAGNAIDRATFGRTWIRQGVKTDNLVHIAHNVTVGENTIIVAQVGIAGSTTVGRHVILAGQAGISGHLDIGDNAVVGPQAGIVKSIKPGETVSGTPGMPHKLWLRAQSIVAGLPGMRKKIAELEKRLAVLEKG.

Catalysis depends on His-237, which acts as the Proton acceptor.

The protein belongs to the transferase hexapeptide repeat family. LpxD subfamily. Homotrimer.

It carries out the reaction a UDP-3-O-[(3R)-3-hydroxyacyl]-alpha-D-glucosamine + a (3R)-hydroxyacyl-[ACP] = a UDP-2-N,3-O-bis[(3R)-3-hydroxyacyl]-alpha-D-glucosamine + holo-[ACP] + H(+). It functions in the pathway bacterial outer membrane biogenesis; LPS lipid A biosynthesis. Functionally, catalyzes the N-acylation of UDP-3-O-acylglucosamine using 3-hydroxyacyl-ACP as the acyl donor. Is involved in the biosynthesis of lipid A, a phosphorylated glycolipid that anchors the lipopolysaccharide to the outer membrane of the cell. The polypeptide is UDP-3-O-acylglucosamine N-acyltransferase (Desulfosudis oleivorans (strain DSM 6200 / JCM 39069 / Hxd3) (Desulfococcus oleovorans)).